We begin with the raw amino-acid sequence, 99 residues long: Large ribosomal subunit protein uL23 (99 aa).

The protein belongs to the universal ribosomal protein uL23 family. In terms of assembly, part of the 50S ribosomal subunit. Contacts protein L29, and trigger factor when it is bound to the ribosome.

One of the early assembly proteins it binds 23S rRNA. One of the proteins that surrounds the polypeptide exit tunnel on the outside of the ribosome. Forms the main docking site for trigger factor binding to the ribosome. The protein is Large ribosomal subunit protein uL23 of Shewanella woodyi (strain ATCC 51908 / MS32).